Reading from the N-terminus, the 502-residue chain is MRIFIAFEGSFEPFDVSADETVEVVKLMIKDYFHIPLSEDKQGRRYLELMYAGAALKDSWSLADVGISFCSTLKCFVKEEDKPTLYVFNAVTQDTMPVMESISLLDKTVSDLRTLVTLRCGLPVSVYCLRTPRGLEMYDCNTLKDYQTDIGTTLRLDVWDGWKEFLMGCLLGQKLKVQRYLSKEGPVLKYQKRVALYIAAFCGYIELTEWALKQGARPHEAVGVHPYRAWCHEALHADVSKCPIHAAAEAGQLLILKAFVNYSVLCLECKNAAGQTPLTIVFKHKHKDCVLYLLSKMWSTVSFPKISVPMRIYIKIKQWILRAQSHSLHKSQFCGARVFGAKVGDTVMVDGFTKPKMTSKSWHKAGNSDSQSIVLKLPSLSKQTASSKPVNPLAISQPDTRKQALKFHPLVNASSFSELQKHQQQNQKKITATARKKEKLIKNTYLPQVPLPPVSRVGYSHPSFFYATPSADFLLKSSFSSFLEHSGKTPWENAIYCLAVAR.

The polypeptide is Protein ANKUB1 (ANKUB1) (Homo sapiens (Human)).